We begin with the raw amino-acid sequence, 264 residues long: Thymidylate synthase (264 aa).

A dUMP-binding site is contributed by Arg-21. His-51 lines the (6R)-5,10-methylene-5,6,7,8-tetrahydrofolate pocket. Position 126 to 127 (126 to 127 (RR)) interacts with dUMP. The active-site Nucleophile is Cys-146. DUMP is bound by residues 166-169 (RSAD), Asn-177, and 207-209 (HLY). Position 169 (Asp-169) interacts with (6R)-5,10-methylene-5,6,7,8-tetrahydrofolate. Ala-263 contributes to the (6R)-5,10-methylene-5,6,7,8-tetrahydrofolate binding site.

It belongs to the thymidylate synthase family. Bacterial-type ThyA subfamily. Homodimer.

It is found in the cytoplasm. The catalysed reaction is dUMP + (6R)-5,10-methylene-5,6,7,8-tetrahydrofolate = 7,8-dihydrofolate + dTMP. The protein operates within pyrimidine metabolism; dTTP biosynthesis. Its function is as follows. Catalyzes the reductive methylation of 2'-deoxyuridine-5'-monophosphate (dUMP) to 2'-deoxythymidine-5'-monophosphate (dTMP) while utilizing 5,10-methylenetetrahydrofolate (mTHF) as the methyl donor and reductant in the reaction, yielding dihydrofolate (DHF) as a by-product. This enzymatic reaction provides an intracellular de novo source of dTMP, an essential precursor for DNA biosynthesis. The chain is Thymidylate synthase from Bdellovibrio bacteriovorus (strain ATCC 15356 / DSM 50701 / NCIMB 9529 / HD100).